The primary structure comprises 453 residues: o-phthalyl amidase (453 aa).

As to quaternary structure, monomer. The N-terminus is blocked.

It catalyses the reaction a phtalamide + H2O = phthalate + a primary amine. With respect to regulation, inhibited by iodoacetate, p-hydroxymercuric benzoate and copper ions. Functionally, catalyzes the removal of the phthalyl group from phthalyl amides generating phthalate and an amine. The enzyme has a broad substrate specificity and hydrolyzes phthalylated amino acids, peptides, beta-lactams, aromatic and aliphatic amines; substitutions allowed on the phthalyl group include 6-F, 6-NH(2), 3-OH, and a nitrogen in the aromatic ring ortho to the carboxy group attached to the amine. In Xanthobacter agilis, this protein is o-phthalyl amidase.